A 218-amino-acid polypeptide reads, in one-letter code: Pyrrolidone-carboxylate peptidase 2 (218 aa).

Catalysis depends on residues Glu-83, Cys-146, and His-170.

The protein belongs to the peptidase C15 family. Homotetramer.

It is found in the cytoplasm. It catalyses the reaction Release of an N-terminal pyroglutamyl group from a polypeptide, the second amino acid generally not being Pro.. In terms of biological role, removes 5-oxoproline from various penultimate amino acid residues except L-proline. This is Pyrrolidone-carboxylate peptidase 2 from Photorhabdus laumondii subsp. laumondii (strain DSM 15139 / CIP 105565 / TT01) (Photorhabdus luminescens subsp. laumondii).